Consider the following 175-residue polypeptide: Ribulose bisphosphate carboxylase small subunit, chloroplastic 2 (175 aa).

The transit peptide at 1 to 46 (MAPTVMASSATSVAPFQGLKSTAGLPVSRRSTNSGFGNVSNGGRIK) directs the protein to the chloroplast.

This sequence belongs to the RuBisCO small chain family. As to quaternary structure, heterohexadecamer of 8 large and 8 small subunits.

Its subcellular location is the plastid. The protein localises to the chloroplast. RuBisCO catalyzes two reactions: the carboxylation of D-ribulose 1,5-bisphosphate, the primary event in carbon dioxide fixation, as well as the oxidative fragmentation of the pentose substrate. Both reactions occur simultaneously and in competition at the same active site. Although the small subunit is not catalytic it is essential for maximal activity. This is Ribulose bisphosphate carboxylase small subunit, chloroplastic 2 from Oryza sativa subsp. japonica (Rice).